The following is a 370-amino-acid chain: Neutral protease 2 homolog AFUB_070680 (370 aa).

The first 19 residues, 1–19, serve as a signal peptide directing secretion; the sequence is MKVTILASAILALINGALA. Positions 20–172 are excised as a propeptide; the sequence is LPANTPTLDV…PQAIKLLDRR (153 aa). 2 cysteine pairs are disulfide-bonded: cysteine 178-cysteine 250 and cysteine 257-cysteine 275. Histidine 300 is a Zn(2+) binding site. The active site involves glutamate 301. 2 residues coordinate Zn(2+): histidine 304 and aspartate 315.

The protein belongs to the peptidase M35 family. The cofactor is Zn(2+).

The protein resides in the secreted. The catalysed reaction is Preferential cleavage of bonds with hydrophobic residues in P1'. Also 3-Asn-|-Gln-4 and 8-Gly-|-Ser-9 bonds in insulin B chain.. Functionally, secreted metalloproteinase that allows assimilation of proteinaceous substrates. Shows high activities on basic nuclear substrates such as histone and protamine. May be involved in virulence. This Aspergillus fumigatus (strain CBS 144.89 / FGSC A1163 / CEA10) (Neosartorya fumigata) protein is Neutral protease 2 homolog AFUB_070680.